The following is a 494-amino-acid chain: UDP-N-acetylmuramate--L-alanine ligase (494 aa).

134–140 serves as a coordination point for ATP; it reads GSHGKTT.

It belongs to the MurCDEF family.

The protein localises to the cytoplasm. It carries out the reaction UDP-N-acetyl-alpha-D-muramate + L-alanine + ATP = UDP-N-acetyl-alpha-D-muramoyl-L-alanine + ADP + phosphate + H(+). The protein operates within cell wall biogenesis; peptidoglycan biosynthesis. Its function is as follows. Cell wall formation. The protein is UDP-N-acetylmuramate--L-alanine ligase of Prochlorococcus marinus (strain NATL1A).